The sequence spans 313 residues: Protease HtpX homolog (313 aa).

2 helical membrane-spanning segments follow: residues 7 to 24 (AMLLAFMTALFMAVGYLI) and 29 to 46 (GMMIALVIAAAMNLFSYW). Histidine 130 is a binding site for Zn(2+). Glutamate 131 is an active-site residue. Histidine 134 contributes to the Zn(2+) binding site. The next 2 membrane-spanning stretches (helical) occupy residues 145–165 (ITATLAGAISMLGNFAFFFGG) and 172–192 (PFGFIGILVAMIVAPLAAMVV). Glutamate 201 contributes to the Zn(2+) binding site. Positions 282 to 313 (GNAPPASLREDEPGADGPWGRSASRARKGPWS) are disordered.

It belongs to the peptidase M48B family. Requires Zn(2+) as cofactor.

The protein resides in the cell inner membrane. In Chelativorans sp. (strain BNC1), this protein is Protease HtpX homolog.